We begin with the raw amino-acid sequence, 398 residues long: S-adenosylmethionine synthase (398 aa).

His-16 is a binding site for ATP. Asp-18 contacts Mg(2+). Position 51 (Glu-51) interacts with K(+). The L-methionine site is built by Glu-64 and Gln-108. The interval 108–118 (QSADIAQGVDA) is flexible loop. Residues 176–178 (DSK), 242–243 (KF), Asp-251, 257–258 (RK), Ala-274, and Lys-278 contribute to the ATP site. L-methionine is bound at residue Asp-251. L-methionine is bound at residue Lys-282.

Belongs to the AdoMet synthase family. As to quaternary structure, homotetramer; dimer of dimers. It depends on Mg(2+) as a cofactor. K(+) serves as cofactor.

Its subcellular location is the cytoplasm. The enzyme catalyses L-methionine + ATP + H2O = S-adenosyl-L-methionine + phosphate + diphosphate. It participates in amino-acid biosynthesis; S-adenosyl-L-methionine biosynthesis; S-adenosyl-L-methionine from L-methionine: step 1/1. In terms of biological role, catalyzes the formation of S-adenosylmethionine (AdoMet) from methionine and ATP. The overall synthetic reaction is composed of two sequential steps, AdoMet formation and the subsequent tripolyphosphate hydrolysis which occurs prior to release of AdoMet from the enzyme. This is S-adenosylmethionine synthase from Nitrobacter hamburgensis (strain DSM 10229 / NCIMB 13809 / X14).